The sequence spans 624 residues: Coagulation factor XI (624 aa).

A signal peptide spans 1-18; the sequence is MTSLHQVLYFIFFASVSS. Apple domains are found at residues 20-103, 110-193, 200-283, and 291-376; these read CVTK…FKQC, CSKD…LKSC, CIRD…LQHC, and CHPS…LRLC. 17 disulfides stabilise this stretch: cysteine 20-cysteine 103, cysteine 46-cysteine 76, cysteine 50-cysteine 56, cysteine 110-cysteine 193, cysteine 136-cysteine 165, cysteine 140-cysteine 146, cysteine 200-cysteine 283, cysteine 226-cysteine 255, cysteine 230-cysteine 236, cysteine 291-cysteine 376, cysteine 317-cysteine 348, cysteine 321-cysteine 327, cysteine 382-cysteine 499, cysteine 415-cysteine 431, cysteine 513-cysteine 580, cysteine 544-cysteine 559, and cysteine 570-cysteine 598. 2 N-linked (GlcNAc...) asparagine glycosylation sites follow: asparagine 90 and asparagine 126. N-linked (GlcNAc...) asparagine glycosylation is present at asparagine 297. The 233-residue stretch at 390-622 folds into the Peptidase S1 domain; sequence VVGGAASVHG…YVDWILEKTQ (233 aa). Histidine 430 functions as the Charge relay system in the catalytic mechanism. Asparagine 449 carries N-linked (GlcNAc...) asparagine glycosylation. Aspartate 479 acts as the Charge relay system in catalysis. An N-linked (GlcNAc...) asparagine glycan is attached at asparagine 490. 547–550 is a binding site for heparin; the sequence is RYRR. Serine 574 acts as the Charge relay system in catalysis.

It belongs to the peptidase S1 family. Plasma kallikrein subfamily. As to quaternary structure, homodimer; disulfide-linked. After activation the heavy and light chains are also linked by a disulfide bond. Interacts (activated) with F9 (inactive and activated) in calcium-dependent manner. Forms a heterodimer with SERPINA5. In terms of processing, activated by factor XIIa (or XII), which cleaves each polypeptide after Arg-389 into the light chain, which contains the active site, and the heavy chain, which associates with high molecular weight (HMW) kininogen. Activated by F12 (activated); the presence of negatively charged surfaces accelerates activation. Activated by F2 (thrombin); the presence of negatively charged surfaces, such as polyphosphate and dextran sulfate, strongly accelerates activation. Autoactivated; the presence of negatively charged surfaces, such as polyphosphate and dextran sulfate, accelerates autoactivation and autolysis. Post-translationally, N-glycosylated on both chains. N-glycosylated sites mainly consist of nonfucosylated sialylated biantennary (in high abundance) and/or triantennary (in low abundance) complex structures.

The protein resides in the secreted. The catalysed reaction is Selective cleavage of Arg-|-Ala and Arg-|-Val bonds in factor IX to form factor IXa.. Its activity is regulated as follows. Inhibited by SERPINA5. Factor XI triggers the middle phase of the intrinsic pathway of blood coagulation by activating factor IX. The chain is Coagulation factor XI (F11) from Mus musculus (Mouse).